We begin with the raw amino-acid sequence, 353 residues long: Photosystem II protein D1 (353 aa).

At Thr-2 the chain carries N-acetylthreonine. A Phosphothreonine modification is found at Thr-2. 3 helical membrane-spanning segments follow: residues 29–46 (YIGWFGVLMIPTLLTATS), 118–133 (HFLLGVACYMGREWEL), and 142–156 (WIAVAYSAPVAAAAA). Position 118 (His-118) interacts with chlorophyll a. Tyr-126 serves as a coordination point for pheophytin a. [CaMn4O5] cluster is bound by residues Asp-170 and Glu-189. The chain crosses the membrane as a helical span at residues 197-218 (FHMLGVAGVFGGSLFSAMHGSL). His-198 contributes to the chlorophyll a binding site. Residues His-215 and 264-265 (SF) contribute to the a quinone site. His-215 serves as a coordination point for Fe cation. His-272 is a Fe cation binding site. A helical membrane pass occupies residues 274-288 (FLAAWPVVGIWFTAL). His-332, Glu-333, Asp-342, and Ala-344 together coordinate [CaMn4O5] cluster. A propeptide spanning residues 345 to 353 (AVEAPSTNG) is cleaved from the precursor.

The protein belongs to the reaction center PufL/M/PsbA/D family. In terms of assembly, PSII is composed of 1 copy each of membrane proteins PsbA, PsbB, PsbC, PsbD, PsbE, PsbF, PsbH, PsbI, PsbJ, PsbK, PsbL, PsbM, PsbT, PsbX, PsbY, PsbZ, Psb30/Ycf12, at least 3 peripheral proteins of the oxygen-evolving complex and a large number of cofactors. It forms dimeric complexes. The D1/D2 heterodimer binds P680, chlorophylls that are the primary electron donor of PSII, and subsequent electron acceptors. It shares a non-heme iron and each subunit binds pheophytin, quinone, additional chlorophylls, carotenoids and lipids. D1 provides most of the ligands for the Mn4-Ca-O5 cluster of the oxygen-evolving complex (OEC). There is also a Cl(-1) ion associated with D1 and D2, which is required for oxygen evolution. The PSII complex binds additional chlorophylls, carotenoids and specific lipids. is required as a cofactor. Post-translationally, tyr-161 forms a radical intermediate that is referred to as redox-active TyrZ, YZ or Y-Z. C-terminally processed by CTPA; processing is essential to allow assembly of the oxygen-evolving complex and thus photosynthetic growth.

Its subcellular location is the plastid. The protein resides in the chloroplast thylakoid membrane. The enzyme catalyses 2 a plastoquinone + 4 hnu + 2 H2O = 2 a plastoquinol + O2. Its function is as follows. Photosystem II (PSII) is a light-driven water:plastoquinone oxidoreductase that uses light energy to abstract electrons from H(2)O, generating O(2) and a proton gradient subsequently used for ATP formation. It consists of a core antenna complex that captures photons, and an electron transfer chain that converts photonic excitation into a charge separation. The D1/D2 (PsbA/PsbD) reaction center heterodimer binds P680, the primary electron donor of PSII as well as several subsequent electron acceptors. This chain is Photosystem II protein D1, found in Nandina domestica (Heavenly bamboo).